A 441-amino-acid chain; its full sequence is Actin-related protein 4 (441 aa).

The segment at 48-73 (VDVDSTKTNSNSEDSKTESEKEKSKR) is disordered. Residues 60–70 (EDSKTESEKEK) show a composition bias toward basic and acidic residues.

Belongs to the actin family. ARP4 subfamily. As to quaternary structure, component of the SWR1 chromatin-remodeling complex and of the NuA4 histone acetyltransferase complex. Interacts with the SWI/SNF complex. Interacts with EAF1A and EAF1B. As to expression, mostly expressed in flowers, and, to a lower extent, in roots, seedlings, leaves and siliques (at protein level).

Its subcellular location is the nucleus. The protein resides in the cytoplasm. In terms of biological role, involved in several developmental processes including organization of plant organs, flowering time, anther development, flower senescence and fertility, probably by regulating the chromatin structure. In Arabidopsis thaliana (Mouse-ear cress), this protein is Actin-related protein 4.